A 326-amino-acid chain; its full sequence is Ketol-acid reductoisomerase (NADP(+)) (326 aa).

A KARI N-terminal Rossmann domain is found at 1 to 180 (MDIIHDNAAD…GLTRGGVLEC (180 aa)). NADP(+) is bound by residues 24 to 27 (YGAQ), arginine 47, and serine 51. Residue histidine 106 is part of the active site. Glycine 132 is an NADP(+) binding site. The region spanning 181 to 326 (TMAQETYEDL…AKIRSLFERN (146 aa)) is the KARI C-terminal knotted domain. Aspartate 189, glutamate 193, glutamate 225, and glutamate 229 together coordinate Mg(2+). Serine 250 is a binding site for substrate.

It belongs to the ketol-acid reductoisomerase family. Requires Mg(2+) as cofactor.

The catalysed reaction is (2R)-2,3-dihydroxy-3-methylbutanoate + NADP(+) = (2S)-2-acetolactate + NADPH + H(+). It carries out the reaction (2R,3R)-2,3-dihydroxy-3-methylpentanoate + NADP(+) = (S)-2-ethyl-2-hydroxy-3-oxobutanoate + NADPH + H(+). It participates in amino-acid biosynthesis; L-isoleucine biosynthesis; L-isoleucine from 2-oxobutanoate: step 2/4. It functions in the pathway amino-acid biosynthesis; L-valine biosynthesis; L-valine from pyruvate: step 2/4. Its function is as follows. Involved in the biosynthesis of branched-chain amino acids (BCAA). Catalyzes an alkyl-migration followed by a ketol-acid reduction of (S)-2-acetolactate (S2AL) to yield (R)-2,3-dihydroxy-isovalerate. In the isomerase reaction, S2AL is rearranged via a Mg-dependent methyl migration to produce 3-hydroxy-3-methyl-2-ketobutyrate (HMKB). In the reductase reaction, this 2-ketoacid undergoes a metal-dependent reduction by NADPH to yield (R)-2,3-dihydroxy-isovalerate. The protein is Ketol-acid reductoisomerase (NADP(+)) of Akkermansia muciniphila (strain ATCC BAA-835 / DSM 22959 / JCM 33894 / BCRC 81048 / CCUG 64013 / CIP 107961 / Muc).